The following is a 103-amino-acid chain: Large ribosomal subunit protein bL21 (103 aa).

The protein belongs to the bacterial ribosomal protein bL21 family. As to quaternary structure, part of the 50S ribosomal subunit. Contacts protein L20.

In terms of biological role, this protein binds to 23S rRNA in the presence of protein L20. In Pseudoalteromonas atlantica (strain T6c / ATCC BAA-1087), this protein is Large ribosomal subunit protein bL21.